The sequence spans 258 residues: Aspartate/glutamate leucyltransferase (258 aa).

This sequence belongs to the R-transferase family. Bpt subfamily.

Its subcellular location is the cytoplasm. It catalyses the reaction N-terminal L-glutamyl-[protein] + L-leucyl-tRNA(Leu) = N-terminal L-leucyl-L-glutamyl-[protein] + tRNA(Leu) + H(+). The enzyme catalyses N-terminal L-aspartyl-[protein] + L-leucyl-tRNA(Leu) = N-terminal L-leucyl-L-aspartyl-[protein] + tRNA(Leu) + H(+). Functions in the N-end rule pathway of protein degradation where it conjugates Leu from its aminoacyl-tRNA to the N-termini of proteins containing an N-terminal aspartate or glutamate. In Rhizobium leguminosarum bv. trifolii (strain WSM2304), this protein is Aspartate/glutamate leucyltransferase.